Reading from the N-terminus, the 201-residue chain is 5'(3')-deoxyribonucleotidase, cytosolic type (201 aa).

Asp-10 serves as the catalytic Nucleophile. The Mg(2+) site is built by Asp-10 and Asp-12. Catalysis depends on Asp-12, which acts as the Proton donor. Substrate-binding residues include Phe-18, Phe-44, Tyr-65, Thr-99, and Lys-134. Asp-145 contacts Mg(2+). A Phosphoserine modification is found at Ser-182.

Belongs to the 5'(3')-deoxyribonucleotidase family. As to quaternary structure, homodimer. Mg(2+) serves as cofactor. In terms of tissue distribution, detected in skeletal muscle, heart and pancreas.

It is found in the cytoplasm. Functionally, dephosphorylates the 5' and 2'(3')-phosphates of deoxyribonucleotides, with a preference for dUMP and dTMP, intermediate activity towards dGMP, and low activity towards dCMP and dAMP. The chain is 5'(3')-deoxyribonucleotidase, cytosolic type (NT5C) from Homo sapiens (Human).